Here is a 378-residue protein sequence, read N- to C-terminus: Holliday junction branch migration complex subunit RuvB 1 (378 aa).

The segment covering 1 to 12 (MAIISSRDTGQN) has biased composition (polar residues). The interval 1 to 62 (MAIISSRDTG…PGEAQEESLR (62 aa)) is disordered. Residues 13 to 222 (AEGPKRRQQK…FGHVQRLRFY (210 aa)) form a large ATPase domain (RuvB-L) region. ATP contacts are provided by residues L61, R62, G103, K106, T107, T108, 169–171 (EDF), R212, Y222, and R259. Residue T107 participates in Mg(2+) binding. The interval 223 to 293 (EPHELVQIVL…VAAAALELFQ (71 aa)) is small ATPAse domain (RuvB-S). The tract at residues 296–378 (PMGLDWIDRK…EAQSPLPLWS (83 aa)) is head domain (RuvB-H). DNA contacts are provided by R351 and R356.

This sequence belongs to the RuvB family. In terms of assembly, homohexamer. Forms an RuvA(8)-RuvB(12)-Holliday junction (HJ) complex. HJ DNA is sandwiched between 2 RuvA tetramers; dsDNA enters through RuvA and exits via RuvB. An RuvB hexamer assembles on each DNA strand where it exits the tetramer. Each RuvB hexamer is contacted by two RuvA subunits (via domain III) on 2 adjacent RuvB subunits; this complex drives branch migration. In the full resolvosome a probable DNA-RuvA(4)-RuvB(12)-RuvC(2) complex forms which resolves the HJ.

The protein resides in the cytoplasm. The enzyme catalyses ATP + H2O = ADP + phosphate + H(+). Its function is as follows. The RuvA-RuvB-RuvC complex processes Holliday junction (HJ) DNA during genetic recombination and DNA repair, while the RuvA-RuvB complex plays an important role in the rescue of blocked DNA replication forks via replication fork reversal (RFR). RuvA specifically binds to HJ cruciform DNA, conferring on it an open structure. The RuvB hexamer acts as an ATP-dependent pump, pulling dsDNA into and through the RuvAB complex. RuvB forms 2 homohexamers on either side of HJ DNA bound by 1 or 2 RuvA tetramers; 4 subunits per hexamer contact DNA at a time. Coordinated motions by a converter formed by DNA-disengaged RuvB subunits stimulates ATP hydrolysis and nucleotide exchange. Immobilization of the converter enables RuvB to convert the ATP-contained energy into a lever motion, pulling 2 nucleotides of DNA out of the RuvA tetramer per ATP hydrolyzed, thus driving DNA branch migration. The RuvB motors rotate together with the DNA substrate, which together with the progressing nucleotide cycle form the mechanistic basis for DNA recombination by continuous HJ branch migration. Branch migration allows RuvC to scan DNA until it finds its consensus sequence, where it cleaves and resolves cruciform DNA. The sequence is that of Holliday junction branch migration complex subunit RuvB 1 from Synechococcus sp. (strain JA-3-3Ab) (Cyanobacteria bacterium Yellowstone A-Prime).